Here is a 545-residue protein sequence, read N- to C-terminus: Carboxypeptidase Y homolog A (545 aa).

Positions 1-18 (MKSSLALALLVGGAIASG) are cleaved as a signal peptide. The propeptide occupies 19–125 (PQQQVLREPV…RLDTYDLRVK (107 aa)). Cystine bridges form between C179–C418, C313–C327, C337–C360, C344–C353, and C382–C388. N210 is a glycosylation site (N-linked (GlcNAc...) asparagine). S266 is a catalytic residue. D457 is an active-site residue. N-linked (GlcNAc...) asparagine glycosylation is found at N487 and N507. The active site involves H518.

It belongs to the peptidase S10 family.

The protein resides in the vacuole. The enzyme catalyses Release of a C-terminal amino acid with broad specificity.. Functionally, vacuolar carboxypeptidase involved in degradation of small peptides. Digests preferentially peptides containing an aliphatic or hydrophobic residue in P1' position, as well as methionine, leucine or phenylalanine in P1 position of ester substrate. The chain is Carboxypeptidase Y homolog A (CPYA) from Ajellomyces capsulatus (strain NAm1 / WU24) (Darling's disease fungus).